The following is a 61-amino-acid chain: MAHPKRRQSKTRTAKRRTHDKAVMPTLAKCPNCGAWHIYHTVCGDCGYYRGKLAIEKEVAV.

The segment covering 1-19 has biased composition (basic residues); sequence MAHPKRRQSKTRTAKRRTH. Residues 1-20 are disordered; that stretch reads MAHPKRRQSKTRTAKRRTHD.

Belongs to the bacterial ribosomal protein bL32 family.

This Porphyromonas gingivalis (strain ATCC 33277 / DSM 20709 / CIP 103683 / JCM 12257 / NCTC 11834 / 2561) protein is Large ribosomal subunit protein bL32.